The following is a 338-amino-acid chain: tRNA N6-adenosine threonylcarbamoyltransferase (338 aa).

The Fe cation site is built by His109 and His113. Substrate contacts are provided by residues 132-136 (AISGA), Asp165, Gly178, and Asn277. Asp302 serves as a coordination point for Fe cation.

This sequence belongs to the KAE1 / TsaD family. The cofactor is Fe(2+).

Its subcellular location is the cytoplasm. The enzyme catalyses L-threonylcarbamoyladenylate + adenosine(37) in tRNA = N(6)-L-threonylcarbamoyladenosine(37) in tRNA + AMP + H(+). Its function is as follows. Required for the formation of a threonylcarbamoyl group on adenosine at position 37 (t(6)A37) in tRNAs that read codons beginning with adenine. Is involved in the transfer of the threonylcarbamoyl moiety of threonylcarbamoyl-AMP (TC-AMP) to the N6 group of A37, together with TsaE and TsaB. TsaD likely plays a direct catalytic role in this reaction. The protein is tRNA N6-adenosine threonylcarbamoyltransferase of Chlamydia trachomatis serovar L2b (strain UCH-1/proctitis).